Here is an 874-residue protein sequence, read N- to C-terminus: Alanine--tRNA ligase (874 aa).

Residues His563, His567, Cys665, and His669 each coordinate Zn(2+).

It belongs to the class-II aminoacyl-tRNA synthetase family. The cofactor is Zn(2+).

The protein resides in the cytoplasm. The catalysed reaction is tRNA(Ala) + L-alanine + ATP = L-alanyl-tRNA(Ala) + AMP + diphosphate. Catalyzes the attachment of alanine to tRNA(Ala) in a two-step reaction: alanine is first activated by ATP to form Ala-AMP and then transferred to the acceptor end of tRNA(Ala). Also edits incorrectly charged Ser-tRNA(Ala) and Gly-tRNA(Ala) via its editing domain. In Aeromonas salmonicida (strain A449), this protein is Alanine--tRNA ligase.